The primary structure comprises 603 residues: Serine palmitoyltransferase 2 (603 aa).

Residues 90–107 (YYYVVATYLTYLVLIIIG) traverse the membrane as a helical segment. Position 398 is an N6-(pyridoxal phosphate)lysine (Lys-398).

Belongs to the class-II pyridoxal-phosphate-dependent aminotransferase family. Lcb1 and lcb2 encode essential subunits of the enzyme and form a heterodimer. Pyridoxal 5'-phosphate serves as cofactor.

The protein localises to the cytoplasm. It is found in the endoplasmic reticulum. Its subcellular location is the membrane. The enzyme catalyses L-serine + hexadecanoyl-CoA + H(+) = 3-oxosphinganine + CO2 + CoA. It participates in lipid metabolism; sphingolipid metabolism. Catalytic subunit of serine palmitoyltransferase (SPT), which catalyzes the committed step in the synthesis of sphingolipids, the condensation of serine with palmitoyl CoA to form the long chain base 3-ketosphinganine. The protein is Serine palmitoyltransferase 2 (lcb2) of Schizosaccharomyces pombe (strain 972 / ATCC 24843) (Fission yeast).